The following is a 202-amino-acid chain: Matrix protein (202 aa).

Positions 35 to 38 (PPES) match the PPXY motif motif. The interval 115–151 (KIRRTLVFQWAESRGPLDGEELEYSQEITWDDDSEFI) is essential for glycoprotein binding.

The protein belongs to the lyssavirus matrix protein family. As to quaternary structure, homomultimer. Interacts with nucleoprotein and with the cytoplasmic domain of glycoprotein.

It is found in the virion membrane. It localises to the host endomembrane system. Functionally, plays a major role in assembly and budding of virion. Completely covers the ribonucleoprotein coil and keep it in condensed bullet-shaped form. Inhibits viral transcription and stimulates replication. Plays a major role in early induction of TRAIL-mediated apoptosis in infected neurons. This is Matrix protein (M) from Myotis mystacinus (Whiskered bat).